The following is a 317-amino-acid chain: MALAVRFWCLFPVGRSAAWGLRLPAGAAGSRGQRVPWRLGASEAMGNSGTFKRSLLFSALSYLGFETYQVISQAVLVHAAAKVFEIEEVLEQADYLYESGETEKLYQLLTQYKESEDAELLWRLARASRDVAQLSGTSEEEKKFLVYEALEYAKRALEKNESSCAAHKWYAICIGDVGDYEGIKAKIANAYIIKEHFEKAIELNPKDATSIHLMGIWCYTVAEMPWYQRRIAKVLFATPPGSTYEEALGYFHRAEQVDPNFYSKNLLLLGKTYLKLHNKKLAAFWLTKAKDYPAHTEEDKQIQTEAAQLLRGFSDKN.

Position 168 is an N6-succinyllysine (Lys-168). 2 TPR repeats span residues 171–207 (AICI…NPKD) and 225–261 (PWYQ…DPNF).

The protein belongs to the RMDN family. Interacts with microtubules.

The protein localises to the cytoplasm. Its subcellular location is the cytoskeleton. It is found in the spindle. The protein resides in the spindle pole. This chain is Regulator of microtubule dynamics protein 1 (RMDN1), found in Bos taurus (Bovine).